Reading from the N-terminus, the 519-residue chain is MNNLNKGDMRRSQYLMFFSNKKENKSYNVGQLVGLILGPLLFVLTLLLFQPDNLSDKGVFVLAITLWIATWWITEAIPIAATSLLPLILLPVGHVLNPEEVSAQYGNDIIFLFLGGFILAIAMERWNLHTRVALRIINTLGTSTGRILLGFMIATGFLSMFVSNTAAVMIMIPIGLAIIKEANELKHGDTKPESISKFEQALVLAIGYAGTIGGLGTLIGTPPLIILKGQYQSAFGEEISFAKWMIIGVPTVIVLLFLVWIYIRYIAFKHDMKTLPGGQDLIRKKLSELGKMKYEEKVVLIVFLLASFLWITREFLLKHWTFTSEVADGTIAMFISVLLFLIPAKNKEKHKRIIDWEVAKDLPWGVLILFGGGLALAKGISESGLANWLGEQLKLIEGVSPLVIVLVITIFVLFLTEITSNTATATMILPILATLSVAVNVHPLLLMVPAAMAANCAYMLPVGTPPNAIVFGTGKISIKKMASVGFWVNLLSIVVIVLVVYFLVPPVLGIDVTQPLPLK.

14 helical membrane-spanning segments follow: residues 29–49, 59–79, 103–123, 136–156, 159–179, 201–221, 241–261, 297–317, 322–342, 362–382, 395–415, 428–448, 451–471, and 490–510; these read VGQLVGLILGPLLFVLTLLLF, VFVLAITLWIATWWITEAIPI, AQYGNDIIFLFLGGFILAIAM, IINTLGTSTGRILLGFMIATG, SMFVSNTAAVMIMIPIGLAII, ALVLAIGYAGTIGGLGTLIGT, FAKWMIIGVPTVIVLLFLVWI, KVVLIVFLLASFLWITREFLL, FTSEVADGTIAMFISVLLFLI, LPWGVLILFGGGLALAKGISE, LIEGVSPLVIVLVITIFVLFL, ILPILATLSVAVNVHPLLLMV, AMAANCAYMLPVGTPPNAIVF, and LLSIVVIVLVVYFLVPPVLGI.

This sequence belongs to the SLC13A/DASS transporter (TC 2.A.47) family. NADC subfamily.

The protein localises to the cell membrane. In terms of biological role, mediates the transport of dicarboxylates across the cytoplasmic membrane via a Na(+)-electrochemical gradient. The protein is Sodium-dependent dicarboxylate transporter SdcS (sdcS) of Staphylococcus saprophyticus subsp. saprophyticus (strain ATCC 15305 / DSM 20229 / NCIMB 8711 / NCTC 7292 / S-41).